The sequence spans 92 residues: Small ribosomal subunit protein uS19 (92 aa).

Protein S19 forms a complex with S13 that binds strongly to the 16S ribosomal RNA. The chain is Small ribosomal subunit protein uS19 from Rhodopseudomonas palustris (strain ATCC BAA-98 / CGA009).